A 269-amino-acid chain; its full sequence is Voltage-gated hydrogen channel 1 (269 aa).

At 1–96 (MTSHDPKAVT…RLRKLFSSHR (96 aa)) the chain is on the cytoplasmic side. Residue Thr-29 is modified to Phosphothreonine. Residues 46-79 (ENEEEEEEPAPTSAEGEGNAEGPDAEAGSASTPR) form a disordered region. A Phosphoserine modification is found at Ser-93. The helical transmembrane segment at 97-117 (FQVIIICLVVLDALLVLAELL) threads the bilayer. Residues 118 to 134 (LDLKIIEPDEQDYAVTA) are Extracellular-facing. The chain crosses the membrane as a helical span at residues 135–157 (FHYMSFAILVFFMLEIFFKIFVF). The Cytoplasmic segment spans residues 158 to 165 (RLEFFHHK). The chain crosses the membrane as a helical span at residues 166–186 (FEILDAFVVVVSFVLDLVLLF). Residues 187–193 (KSHHFEA) lie on the Extracellular side of the membrane. A helical membrane pass occupies residues 194–214 (LGLLILLRLWRVARIINGIII). The Cytoplasmic portion of the chain corresponds to 215–269 (SVKTRSERQILRLKQINIQLATKIQHLEFSCSEKEQEIERLNKLLKQNGLLGDVN). Positions 221-261 (ERQILRLKQINIQLATKIQHLEFSCSEKEQEIERLNKLLKQ) form a coiled coil.

This sequence belongs to the voltage-gated proton channel (VPC) (TC 1.A.51) family. In terms of assembly, homodimer; each protomer forms its own proton conduction pathway. Post-translationally, phosphorylated in vitro by PRKCD. Phosphorylation may enhance channel gating. As to expression, enriched in immune tissues, such as bone marrow, macrophages and spleen.

The protein resides in the cell membrane. It is found in the apical cell membrane. It localises to the cytoplasmic vesicle. Its subcellular location is the phagosome membrane. The protein localises to the cell projection. The protein resides in the cilium. It is found in the flagellum membrane. It catalyses the reaction H(+)(in) = H(+)(out). Its activity is regulated as follows. The dimers display cooperative channel gating. The channel activity is inhibited by zinc ions. Voltage-gated proton-selective channel that conducts outward proton currents in response to intracellular acidification. Lacks a canonical ion-channel pore domain and mediates proton permeability via its voltage sensor domain. Provides for proton efflux that compensates for electron charge generated by NADPH oxidase activity either in the extracellular or phagosomal compartments, thus enabling the production of high levels of bactericidal reactive oxygen species during the respiratory burst. Opens when the pH of airway surface liquid exceeds 7 and contributes to respiratory epithelial acid secretion to maintain pH in the mucosa. The protein is Voltage-gated hydrogen channel 1 of Mus musculus (Mouse).